The primary structure comprises 365 residues: DNA replication and repair protein RecF (365 aa).

An ATP-binding site is contributed by 30–37 (GENGQGKT).

It belongs to the RecF family.

The protein localises to the cytoplasm. Functionally, the RecF protein is involved in DNA metabolism; it is required for DNA replication and normal SOS inducibility. RecF binds preferentially to single-stranded, linear DNA. It also seems to bind ATP. The sequence is that of DNA replication and repair protein RecF from Desulfitobacterium hafniense (strain DSM 10664 / DCB-2).